Here is a 961-residue protein sequence, read N- to C-terminus: MHLNDIMASPHEPLNWSSSPNLIVDTIQEDKDYRVDYGDCTTIGHHEIKETPDKCDFLDNTNSPVNATVLNSISEDSRDQFENSVLQLRDQDEPENTAPQGSSHSGDGGNNSANEDIRIHFSRSRSGSGNGGFLEGLFGCLRPVWNIIGKAYSTDYKLQQQDTWEVPFEEISELQWLGSGAQGAVFLGKFRGEEVAIKKVREQKETDIKHLRKLKHPNIIAFKGVCTQAPCYCILMEYCAQGQLYEVLRAGRKVTPKLLVEWSTGIASGMNYLHLHKIIHRDLKSPNVLVTHADTVKISDFGTSKELSDKSTKMSFAGTVAWMAPEVIRNEPVSEKVDIWSFGVLLWELLTGEIPYKDVDSSAIIWGVGSNSLHLPVPSTCPDGFKILMKQTWQSKPRNRPSFRQILMHLDIAAADVLGTPQETYFKSQAEWREEVKKHFEKIKSEGTCIHRLDEELIRRRREELRHALDIREHYERKLERANNLYMELSSIMLQLEVREKELTRREQTVEKKYPGTYKRHPVRPIVHPNSFEKLIKKKGPPSRVPSQSKRPDLLKSDGIVNAEGSAASASPISGSPKTSSGGGKGRYRSKPRHRRGNSKGSHADFVGVLKYQESPAPSQQSSQHQTPASPPVTPCSPYHETSQVMPTRHQTLNVHGQNIANCANNLRYFGPAAALRSPLSSHAHRRMSGFSPDLLSSTLEADSRIQPEREYEYCEQHPYNPSQGCTETSVQHDIDTENLNNTNVVTAEYRTSDGDLPDSPRHNLVQEDYEKLETGGEQFSSLKAAVGVSALTVPTPPALPRRIHTLRKNGDDSSEGEEGEVDSEVEFPRRHRPPRGMSTCQSYSTFSSENFSVSDGEEGNTSDHSNSPDDVACGNKVWQVDKLDDLLSQTPEIPIEISMQSDGLSDKECAVRRVKTQMSLGKLCPEEHNYENAESDCDSSEGECSDATVRTNNPVNSSTW.

Positions 89 to 115 (RDQDEPENTAPQGSSHSGDGGNNSANE) are disordered. A compositionally biased stretch (low complexity) spans 101–114 (GSSHSGDGGNNSAN). The Protein kinase domain occupies 171-412 (ISELQWLGSG…FRQILMHLDI (242 aa)). ATP contacts are provided by residues 177-185 (LGSGAQGAV) and Lys198. Asp282 functions as the Proton acceptor in the catalytic mechanism. 2 leucine-zipper regions span residues 436–457 (VKKH…DEEL) and 489–510 (LSSI…EQTV). Residues 460–497 (RRREELRHALDIREHYERKLERANNLYMELSSIMLQLE) adopt a coiled-coil conformation. Disordered stretches follow at residues 507 to 644 (EQTV…ETSQ), 796 to 874 (TPPA…DVAC), and 933 to 961 (NAES…SSTW). Residues 563–580 (AEGSAASASPISGSPKTS) show a composition bias toward low complexity. Residues 586–598 (GRYRSKPRHRRGN) show a composition bias toward basic residues. Residues 613 to 628 (QESPAPSQQSSQHQTP) show a composition bias toward low complexity. Acidic residues predominate over residues 813–826 (DSSEGEEGEVDSEV). The tract at residues 814-827 (SSEGEEGEVDSEVE) is acidic. Residues 839–854 (STCQSYSTFSSENFSV) are compositionally biased toward polar residues. Residues 934 to 945 (AESDCDSSEGEC) are compositionally biased toward acidic residues. The span at 949–961 (TVRTNNPVNSSTW) shows a compositional bias: polar residues.

The protein belongs to the protein kinase superfamily. Ser/Thr protein kinase family.

It is found in the cytoplasm. The protein resides in the membrane. It catalyses the reaction L-seryl-[protein] + ATP = O-phospho-L-seryl-[protein] + ADP + H(+). The catalysed reaction is L-threonyl-[protein] + ATP = O-phospho-L-threonyl-[protein] + ADP + H(+). Its function is as follows. May have a role in the JNK signaling pathway. The protein is Mitogen-activated protein kinase kinase kinase 13-B (map3k13-b) of Xenopus laevis (African clawed frog).